The sequence spans 163 residues: uncharacterized protein (163 aa).

As to expression, expressed in keratinocytes.

This is an uncharacterized protein from Homo sapiens (Human).